Reading from the N-terminus, the 635-residue chain is Early transcription factor 70 kDa subunit (635 aa).

One can recognise a Helicase ATP-binding domain in the interval 32-185 (RSIIDENKSV…SNIISLMSDE (154 aa)). An ATP-binding site is contributed by 45-52 (HIMGSGKT). A DEXH box motif is present at residues 135–138 (DEAH). Residues 326 to 505 (KFKYFIGKIT…TLPFDIKKLL (180 aa)) enclose the Helicase C-terminal domain.

Belongs to the helicase family. VETF subfamily. As to quaternary structure, heterodimer of a 70 kDa and a 82 kDa subunit.

The protein resides in the virion. Functionally, acts with RNA polymerase to initiate transcription from early gene promoters. A DNA-dependent ATPase activity is associated with VETF. This Erythrocebus patas (Red guenon) protein is Early transcription factor 70 kDa subunit (VETFS).